A 147-amino-acid chain; its full sequence is Protein phosphatase 1 regulatory subunit 14A (147 aa).

A compositionally biased stretch (basic residues) spans M1–L11. Positions M1–V37 are disordered. S26 is modified (phosphoserine). Positions A35–R120 are inhibitory. Residue T38 is modified to Phosphothreonine; by PKC. A disordered region spans residues L118–P147. The segment covering P127–P137 has biased composition (polar residues). Phosphoserine is present on residues S128, S134, and S136.

The protein belongs to the PP1 inhibitor family. Isoform 1 is detected in aorta and testis. Isoform 2 is detected in aorta.

The protein resides in the cytoplasm. In terms of biological role, inhibitor of PPP1CA. Has over 1000-fold higher inhibitory activity when phosphorylated, creating a molecular switch for regulating the phosphorylation status of PPP1CA substrates and smooth muscle contraction. This chain is Protein phosphatase 1 regulatory subunit 14A (PPP1R14A), found in Homo sapiens (Human).